The chain runs to 227 residues: 2,3-bisphosphoglycerate-dependent phosphoglycerate mutase (227 aa).

Residues Arg7–Asn14, Thr20–Gly21, Arg59, Glu86–Tyr89, Lys97, Arg113–Arg114, and Gly182–Asn183 each bind substrate. The active-site Tele-phosphohistidine intermediate is His8. Glu86 (proton donor/acceptor) is an active-site residue.

It belongs to the phosphoglycerate mutase family. BPG-dependent PGAM subfamily. In terms of assembly, homodimer.

It catalyses the reaction (2R)-2-phosphoglycerate = (2R)-3-phosphoglycerate. The protein operates within carbohydrate degradation; glycolysis; pyruvate from D-glyceraldehyde 3-phosphate: step 3/5. Its function is as follows. Catalyzes the interconversion of 2-phosphoglycerate and 3-phosphoglycerate. This is 2,3-bisphosphoglycerate-dependent phosphoglycerate mutase from Haemophilus ducreyi (strain 35000HP / ATCC 700724).